We begin with the raw amino-acid sequence, 927 residues long: Valine--tRNA ligase (927 aa).

Residues P45–H55 carry the 'HIGH' region motif. The 'KMSKS' region motif lies at K571–S575. K574 is a binding site for ATP. Residues S856–A917 are a coiled coil.

This sequence belongs to the class-I aminoacyl-tRNA synthetase family. ValS type 1 subfamily. Monomer.

It localises to the cytoplasm. It catalyses the reaction tRNA(Val) + L-valine + ATP = L-valyl-tRNA(Val) + AMP + diphosphate. Its function is as follows. Catalyzes the attachment of valine to tRNA(Val). As ValRS can inadvertently accommodate and process structurally similar amino acids such as threonine, to avoid such errors, it has a 'posttransfer' editing activity that hydrolyzes mischarged Thr-tRNA(Val) in a tRNA-dependent manner. This Mesorhizobium japonicum (strain LMG 29417 / CECT 9101 / MAFF 303099) (Mesorhizobium loti (strain MAFF 303099)) protein is Valine--tRNA ligase.